We begin with the raw amino-acid sequence, 521 residues long: Bifunctional dihydrofolate reductase-thymidylate synthase (521 aa).

Positions alanine 22 to proline 232 constitute a DHFR domain. Valine 26 is a substrate binding site. NADP(+) contacts are provided by residues alanine 28 and glycine 34–serine 40. Aspartate 48 contacts substrate. NADP(+) is bound by residues arginine 78–threonine 80 and leucine 99–threonine 102. The substrate site is built by isoleucine 154, tyrosine 160, and threonine 178. Glycine 155–glutamate 162 is a binding site for NADP(+). A thymidylate synthase region spans residues glutamate 237–valine 521. Residue arginine 257 coordinates dUMP. Residue cysteine 403 is part of the active site. Residues histidine 404, glutamine 422–aspartate 426, asparagine 434, and histidine 464–tyrosine 466 contribute to the dUMP site.

The protein in the N-terminal section; belongs to the dihydrofolate reductase family. In the C-terminal section; belongs to the thymidylate synthase family. In terms of assembly, homodimer.

It carries out the reaction (6S)-5,6,7,8-tetrahydrofolate + NADP(+) = 7,8-dihydrofolate + NADPH + H(+). The enzyme catalyses dUMP + (6R)-5,10-methylene-5,6,7,8-tetrahydrofolate = 7,8-dihydrofolate + dTMP. The protein operates within cofactor biosynthesis; tetrahydrofolate biosynthesis; 5,6,7,8-tetrahydrofolate from 7,8-dihydrofolate: step 1/1. Bifunctional enzyme. Involved in de novo dTMP biosynthesis. Key enzyme in folate metabolism. Catalyzes an essential reaction for de novo glycine and purine synthesis, DNA precursor synthesis, and for the conversion of dUMP to dTMP. The sequence is that of Bifunctional dihydrofolate reductase-thymidylate synthase from Trypanosoma cruzi.